The sequence spans 345 residues: MNDIFIIAGPTASGKSELAMLLAQKFNGVIINADSMQIYKEIPIITASPSISEKQQIDHYLYNYVSIFHSDINELNSFDNISQSKVNADYNNINLQQSITKHLTDRRYSVAKYVQEACKIIRSVIHALKLPIVVGGSGMYINALVYGIHHIPEITLEIRMQVQDLYKKLTKQEFYQKLIDLDPISKNYIHSSDAQRMIRAYEVVLQTNKSIFSYHNSKLVSPLEGYNVKKIILLPDRQLLYQNCNQRFAKLATNGELVDEIIKIKPYYDHISISAKKALGINEIISYLNQELTIEEAITIAQQKIRQYAKRQLTWFRNQTINGYTLHYQSMSELYKTQVNDVFFN.

9–16 serves as a coordination point for ATP; that stretch reads GPTASGKS. Position 11–16 (11–16) interacts with substrate; the sequence is TASGKS. 2 interaction with substrate tRNA regions span residues 34-37 and 195-199; these read DSMQ and QRMIR.

This sequence belongs to the IPP transferase family. In terms of assembly, monomer. The cofactor is Mg(2+).

The enzyme catalyses adenosine(37) in tRNA + dimethylallyl diphosphate = N(6)-dimethylallyladenosine(37) in tRNA + diphosphate. Its function is as follows. Catalyzes the transfer of a dimethylallyl group onto the adenine at position 37 in tRNAs that read codons beginning with uridine, leading to the formation of N6-(dimethylallyl)adenosine (i(6)A). The protein is tRNA dimethylallyltransferase of Orientia tsutsugamushi (strain Ikeda) (Rickettsia tsutsugamushi).